We begin with the raw amino-acid sequence, 569 residues long: Lysine--tRNA ligase (569 aa).

Mg(2+) is bound by residues E414 and E421.

Belongs to the class-II aminoacyl-tRNA synthetase family. Homodimer. Requires Mg(2+) as cofactor.

It is found in the cytoplasm. The catalysed reaction is tRNA(Lys) + L-lysine + ATP = L-lysyl-tRNA(Lys) + AMP + diphosphate. The chain is Lysine--tRNA ligase from Christiangramia forsetii (strain DSM 17595 / CGMCC 1.15422 / KT0803) (Gramella forsetii).